The following is a 194-amino-acid chain: ATP-dependent Clp protease proteolytic subunit (194 aa).

S98 acts as the Nucleophile in catalysis. H123 is an active-site residue.

Belongs to the peptidase S14 family. As to quaternary structure, fourteen ClpP subunits assemble into 2 heptameric rings which stack back to back to give a disk-like structure with a central cavity, resembling the structure of eukaryotic proteasomes.

It is found in the cytoplasm. It catalyses the reaction Hydrolysis of proteins to small peptides in the presence of ATP and magnesium. alpha-casein is the usual test substrate. In the absence of ATP, only oligopeptides shorter than five residues are hydrolyzed (such as succinyl-Leu-Tyr-|-NHMec, and Leu-Tyr-Leu-|-Tyr-Trp, in which cleavage of the -Tyr-|-Leu- and -Tyr-|-Trp bonds also occurs).. In terms of biological role, cleaves peptides in various proteins in a process that requires ATP hydrolysis. Has a chymotrypsin-like activity. Plays a major role in the degradation of misfolded proteins. The chain is ATP-dependent Clp protease proteolytic subunit from Ruminiclostridium cellulolyticum (strain ATCC 35319 / DSM 5812 / JCM 6584 / H10) (Clostridium cellulolyticum).